We begin with the raw amino-acid sequence, 448 residues long: Phosphoglucosamine mutase (448 aa).

The Phosphoserine intermediate role is filled by Ser100. Mg(2+) contacts are provided by Ser100, Asp240, Asp242, and Asp244. Ser100 is modified (phosphoserine).

This sequence belongs to the phosphohexose mutase family. Mg(2+) is required as a cofactor. Activated by phosphorylation.

The enzyme catalyses alpha-D-glucosamine 1-phosphate = D-glucosamine 6-phosphate. In terms of biological role, catalyzes the conversion of glucosamine-6-phosphate to glucosamine-1-phosphate. The chain is Phosphoglucosamine mutase from Clostridium tetani (strain Massachusetts / E88).